We begin with the raw amino-acid sequence, 219 residues long: Glutathione S-transferase-like protein LUC7 (219 aa).

The region spanning 3 to 84 (PFGRLYSFMP…YLAQSGPYSE (82 aa)) is the GST N-terminal domain. Residues 90–219 (DAATSAKIRQ…NLIDVKRVHE (130 aa)) form the GST C-terminal domain.

Belongs to the GST superfamily.

In terms of biological role, glutathione S-transferase-like protein; part of the gene cluster that mediates the biosynthesis of the mycotoxin lucilactaene and the lucilactaene-related compound NG-391 that act as cell cycle inhibitors with potent growth inhibitory activity against malarial parasites, moderate growth inhibitory activity against cancer cells, and no activity against bacteria and fungi. Within the cluster, LUC7 and LUC8 encode proteins which are not commonly involved in the biosynthesis of secondary metabolites and are not essential for lucilactaene biosynthesis. This Fusarium sp protein is Glutathione S-transferase-like protein LUC7.